The primary structure comprises 162 residues: Endoribonuclease YbeY (162 aa).

Residues histidine 128, histidine 132, and histidine 138 each coordinate Zn(2+).

Belongs to the endoribonuclease YbeY family. Zn(2+) is required as a cofactor.

Its subcellular location is the cytoplasm. Single strand-specific metallo-endoribonuclease involved in late-stage 70S ribosome quality control and in maturation of the 3' terminus of the 16S rRNA. The polypeptide is Endoribonuclease YbeY (Lactococcus lactis subsp. cremoris (strain MG1363)).